Here is a 250-residue protein sequence, read N- to C-terminus: MTETESQKQIKLEICIDNLESAENAVAGGADRLEVCSALQLGGLTPSVGFVSILSYKYPDIPLYCMIRQRAGDFVYNEDEMAANMEDVEWLKKAGATGFVFGALTSAGSLDRTSCQSIIETARPHPVTFHRAIDVAYDWKTCLEDAIDVGFKAVLTSGQEPSALDGVYIIREMQELHKGKIDVLAGCGVNSSNVANLVEWTKCHWYHASASVAKKNAPLNKVSMGKQDNQPSRVTSLEEVRMLKATLAPV.

It belongs to the CutC family.

Involved in copper homeostasis. Affects body morphology and length, egg laying and brood size. In Caenorhabditis elegans, this protein is Copper homeostasis protein cutC homolog (cutc-1).